Reading from the N-terminus, the 522-residue chain is 2-isopropylmalate synthase (522 aa).

The Pyruvate carboxyltransferase domain maps to 5–267; that stretch reads VIIFDTTLRD…ETGINAKEIH (263 aa). The Mn(2+) site is built by D14, H202, H204, and N238. The segment at 392–522 is regulatory domain; it reads QLQQLVVQSD…MHKNRELGGV (131 aa).

The protein belongs to the alpha-IPM synthase/homocitrate synthase family. LeuA type 1 subfamily. In terms of assembly, homodimer. The cofactor is Mn(2+).

The protein resides in the cytoplasm. It carries out the reaction 3-methyl-2-oxobutanoate + acetyl-CoA + H2O = (2S)-2-isopropylmalate + CoA + H(+). It functions in the pathway amino-acid biosynthesis; L-leucine biosynthesis; L-leucine from 3-methyl-2-oxobutanoate: step 1/4. Catalyzes the condensation of the acetyl group of acetyl-CoA with 3-methyl-2-oxobutanoate (2-ketoisovalerate) to form 3-carboxy-3-hydroxy-4-methylpentanoate (2-isopropylmalate). This is 2-isopropylmalate synthase from Shewanella sp. (strain ANA-3).